The primary structure comprises 566 residues: Sulfite reductase [NADPH] hemoprotein beta-component (566 aa).

4 residues coordinate [4Fe-4S] cluster: Cys430, Cys436, Cys475, and Cys479. Cys479 serves as a coordination point for siroheme.

The protein belongs to the nitrite and sulfite reductase 4Fe-4S domain family. Alpha(8)-beta(8). The alpha component is a flavoprotein, the beta component is a hemoprotein. It depends on siroheme as a cofactor. The cofactor is [4Fe-4S] cluster.

It catalyses the reaction hydrogen sulfide + 3 NADP(+) + 3 H2O = sulfite + 3 NADPH + 4 H(+). The protein operates within sulfur metabolism; hydrogen sulfide biosynthesis; hydrogen sulfide from sulfite (NADPH route): step 1/1. Functionally, component of the sulfite reductase complex that catalyzes the 6-electron reduction of sulfite to sulfide. This is one of several activities required for the biosynthesis of L-cysteine from sulfate. In Baumannia cicadellinicola subsp. Homalodisca coagulata, this protein is Sulfite reductase [NADPH] hemoprotein beta-component.